The primary structure comprises 615 residues: 70 kDa neurofilament protein (615 aa).

The segment at 1–31 (MSVTQKKTEISTTTTYEGESRPSSGMSGFSY) is disordered. The tract at residues 1 to 99 (MSVTQKKTEI…KANREREKQD (99 aa)) is head. Residues 21-30 (RPSSGMSGFS) are compositionally biased toward polar residues. One can recognise an IF rod domain in the interval 96–449 (EKQDMRDLNE…KLLEGEESRV (354 aa)). Residues 100–135 (MRDLNERFANYIEKVRFLEAQNKKLAGELEELKSKW) form a coil 1A region. Residues 136–145 (GKETSAIKEM) form a linker 1 region. A coil 1B region spans residues 146–284 (YETELEEARK…VHAQELKELA (139 aa)). Positions 285–303 (ALAYRDTTAENREFWRNEL) are linker 12. A coil 2 region spans residues 304-449 (AQAIRDIQQE…KLLEGEESRV (146 aa)). The tract at residues 450–615 (GMKQIVEQVV…ANYTQNTVYQ (166 aa)) is tail. The region spanning 499 to 612 (AKTTYQRTSK…EDKANYTQNT (114 aa)) is the LTD domain.

It belongs to the intermediate filament family.

The chain is 70 kDa neurofilament protein from Doryteuthis pealeii (Longfin inshore squid).